The following is a 96-amino-acid chain: Aspartyl/glutamyl-tRNA(Asn/Gln) amidotransferase subunit C (96 aa).

Belongs to the GatC family. In terms of assembly, heterotrimer of A, B and C subunits.

It carries out the reaction L-glutamyl-tRNA(Gln) + L-glutamine + ATP + H2O = L-glutaminyl-tRNA(Gln) + L-glutamate + ADP + phosphate + H(+). The enzyme catalyses L-aspartyl-tRNA(Asn) + L-glutamine + ATP + H2O = L-asparaginyl-tRNA(Asn) + L-glutamate + ADP + phosphate + 2 H(+). Functionally, allows the formation of correctly charged Asn-tRNA(Asn) or Gln-tRNA(Gln) through the transamidation of misacylated Asp-tRNA(Asn) or Glu-tRNA(Gln) in organisms which lack either or both of asparaginyl-tRNA or glutaminyl-tRNA synthetases. The reaction takes place in the presence of glutamine and ATP through an activated phospho-Asp-tRNA(Asn) or phospho-Glu-tRNA(Gln). The polypeptide is Aspartyl/glutamyl-tRNA(Asn/Gln) amidotransferase subunit C (Symbiobacterium thermophilum (strain DSM 24528 / JCM 14929 / IAM 14863 / T)).